The sequence spans 169 residues: Translationally-controlled tumor protein homolog (169 aa).

The TCTP domain occupies 1-169 (MIIYKDIVSG…FKDGLEEEKF (169 aa)).

This sequence belongs to the TCTP family.

The protein resides in the cytoplasm. Functionally, involved in calcium binding and microtubule stabilization. This Branchiostoma belcheri (Amphioxus) protein is Translationally-controlled tumor protein homolog.